The following is a 396-amino-acid chain: Ribosomal RNA large subunit methyltransferase I (396 aa).

The PUA domain maps to 2–81 (SVRLVLAKGR…ESIDIAFFTR (80 aa)).

It belongs to the methyltransferase superfamily. RlmI family.

Its subcellular location is the cytoplasm. The enzyme catalyses cytidine(1962) in 23S rRNA + S-adenosyl-L-methionine = 5-methylcytidine(1962) in 23S rRNA + S-adenosyl-L-homocysteine + H(+). Its function is as follows. Specifically methylates the cytosine at position 1962 (m5C1962) of 23S rRNA. The chain is Ribosomal RNA large subunit methyltransferase I from Escherichia coli (strain SMS-3-5 / SECEC).